A 544-amino-acid chain; its full sequence is Potential vesicular glutamate transporter vglu-3 (544 aa).

At 1-49 (MPNGSIRNCANAVADTVRQTFSRKTWEHKEQLQTITEQKKFFLRKVRWQ) the chain is on the cytoplasmic side. A helical transmembrane segment spans residues 50–70 (IAILAHFGFAISFGIRSNFGV). Over 71–104 (AKNRMVNNFTDAYGEVHEREFLWTGAEVGMMESS) the chain is Extracellular. An N-linked (GlcNAc...) asparagine glycan is attached at N78. The chain crosses the membrane as a helical span at residues 105-125 (FFYGYAASQIPAGVLAAKFAP). Topologically, residues 126–127 (NK) are cytoplasmic. The helical transmembrane segment at 128–148 (IFMLGILVASFMNILSAISFN) threads the bilayer. Residues 149-154 (FHPYTD) lie on the Extracellular side of the membrane. The helical transmembrane segment at 155 to 175 (IFVMVVQAVQGLALGVLYPAM) threads the bilayer. Residues 176 to 193 (HGVWKFWAPPLERSKLAT) lie on the Cytoplasmic side of the membrane. Residues 194–214 (TAFTGSSVGVMTGLPASAYLV) traverse the membrane as a helical segment. Residues 215–219 (SHFSW) lie on the Extracellular side of the membrane. A helical transmembrane segment spans residues 220-240 (STPFYVFGVVGIIWSLIWMYV). Residues 241-285 (SSHSPETHGYISDDEKKQVTEKIGDVAVKNMSLTTLPWRDMMTSS) are Cytoplasmic-facing. Residues 286-306 (AVWAIIICTFCRSWGFFLLLG) form a helical membrane-spanning segment. Residues 307 to 323 (NQLTYMKDVLHIDIKNS) lie on the Extracellular side of the membrane. The chain crosses the membrane as a helical span at residues 324–344 (GFISIFPQFGMCIVTLATGQL). Residues 345-360 (CDYLRSSGKMSTEAVR) are Cytoplasmic-facing. Residues 361–381 (KSVNTFGFTVEAMMLGCLAFV) traverse the membrane as a helical segment. The Extracellular portion of the chain corresponds to 382–384 (RDP). The helical transmembrane segment at 385-405 (VIAVTCLVIACTGSGSVLSGF) threads the bilayer. Over 406–416 (NVNHFDIAPRY) the chain is Cytoplasmic. A helical membrane pass occupies residues 417 to 437 (APILMGIANGLGAVAGVGGMV). Over 438–450 (TNTVTYQNPDGWK) the chain is Extracellular. A helical transmembrane segment spans residues 451 to 471 (WVFLLAMAIDIFGVIFFLIFA). Residues 472-544 (KGDVLPWARE…APAEKSESSS (73 aa)) lie on the Cytoplasmic side of the membrane. Residues 501 to 544 (SLSRKTRNREGDTSYEKMEEDSEMKPCSKKVEARAPAEKSESSS) are disordered. Positions 508 to 544 (NREGDTSYEKMEEDSEMKPCSKKVEARAPAEKSESSS) are enriched in basic and acidic residues.

Belongs to the major facilitator superfamily. Sodium/anion cotransporter family. VGLUT subfamily.

It is found in the membrane. This is Potential vesicular glutamate transporter vglu-3 (vglu-3) from Caenorhabditis elegans.